The chain runs to 211 residues: tRNA (guanine-N(7)-)-methyltransferase (211 aa).

S-adenosyl-L-methionine contacts are provided by Glu44, Asp69, Asp96, and Asp118. Asp118 is an active-site residue. Substrate is bound at residue Lys122. An interaction with RNA region spans residues 124 to 129 (KHEKRR). Residues Asp154 and 191-194 (TEYE) each bind substrate.

Belongs to the class I-like SAM-binding methyltransferase superfamily. TrmB family.

It carries out the reaction guanosine(46) in tRNA + S-adenosyl-L-methionine = N(7)-methylguanosine(46) in tRNA + S-adenosyl-L-homocysteine. It participates in tRNA modification; N(7)-methylguanine-tRNA biosynthesis. Its function is as follows. Catalyzes the formation of N(7)-methylguanine at position 46 (m7G46) in tRNA. This Streptococcus uberis (strain ATCC BAA-854 / 0140J) protein is tRNA (guanine-N(7)-)-methyltransferase.